Reading from the N-terminus, the 90-residue chain is RNA-binding protein Hfq (90 aa).

The Sm domain occupies 9-69; the sequence is DRFLNHLRVN…ISTIIPSSYV (61 aa).

It belongs to the Hfq family. As to quaternary structure, homohexamer.

Functionally, RNA chaperone that binds small regulatory RNA (sRNAs) and mRNAs to facilitate mRNA translational regulation in response to envelope stress, environmental stress and changes in metabolite concentrations. Also binds with high specificity to tRNAs. The protein is RNA-binding protein Hfq of Thermotoga sp. (strain RQ2).